We begin with the raw amino-acid sequence, 128 residues long: Small ribosomal subunit protein bS6 (128 aa).

This sequence belongs to the bacterial ribosomal protein bS6 family.

Binds together with bS18 to 16S ribosomal RNA. The sequence is that of Small ribosomal subunit protein bS6 (rpsF) from Thermotoga maritima (strain ATCC 43589 / DSM 3109 / JCM 10099 / NBRC 100826 / MSB8).